The following is a 401-amino-acid chain: MFKNNKPPKYGNLVTILSLDGGGVRGIIGGVILANLEKHLQEIDNDESVRLADYFDVIAGTSTGGLMTAMLTAPNDSGRPLYAAKDIVPFYLEESPKIFYGSKWWDPSALWALFRPKYNGEYLHTRLGEILGETKLDQTLTNVVIPTFDIKKLQPTIFSSYHASVDPSLNAKLSDICIGTSAAPFYLPPYKFPENDKMRTFNLIDGGVTANDPTLVGMTAMSRKSIIKHPDMDGFKPLEYEKYIVISIGTGSAKREEYYSAVEAAKWGFENWAYNWKHKTTPILDIIFESSRDMVQYHTSVLFQALESEDNYLRIDADTLKKDEVFMDDSETLNLENLKNIGEKLLDTNVMRMNLDTYTYEPIPKTVNNDQELKRFAKILSDEKKLRNKTFKTMIDDSSNS.

One can recognise a PNPLA domain in the interval 17-218 (LSLDGGGVRG…TANDPTLVGM (202 aa)). The GXGXXG signature appears at 21–26 (GGGVRG). The short motif at 60 to 64 (GTSTG) is the GXSXG element. The Nucleophile role is filled by Ser62. The Proton acceptor role is filled by Asp205. Residues 205–207 (DGG) carry the DGA/G motif.

This sequence belongs to the patatin family.

Possesses non-specific lipolytic acyl hydrolase (LAH) activity. Hydrolyzes phospholipids as well as galactolipids. May play a role in disease resistance. This is Patatin-like protein 4 (PLP4) from Arabidopsis thaliana (Mouse-ear cress).